Reading from the N-terminus, the 166-residue chain is NAD(P)H-quinone oxidoreductase subunit I, chloroplastic (166 aa).

2 4Fe-4S ferredoxin-type domains span residues 55-84 (GRIH…VDWK) and 95-124 (LNYS…MTEE). 8 residues coordinate [4Fe-4S] cluster: cysteine 64, cysteine 67, cysteine 70, cysteine 74, cysteine 104, cysteine 107, cysteine 110, and cysteine 114.

This sequence belongs to the complex I 23 kDa subunit family. NDH is composed of at least 16 different subunits, 5 of which are encoded in the nucleus. Requires [4Fe-4S] cluster as cofactor.

The protein resides in the plastid. It localises to the chloroplast thylakoid membrane. It catalyses the reaction a plastoquinone + NADH + (n+1) H(+)(in) = a plastoquinol + NAD(+) + n H(+)(out). It carries out the reaction a plastoquinone + NADPH + (n+1) H(+)(in) = a plastoquinol + NADP(+) + n H(+)(out). In terms of biological role, NDH shuttles electrons from NAD(P)H:plastoquinone, via FMN and iron-sulfur (Fe-S) centers, to quinones in the photosynthetic chain and possibly in a chloroplast respiratory chain. The immediate electron acceptor for the enzyme in this species is believed to be plastoquinone. Couples the redox reaction to proton translocation, and thus conserves the redox energy in a proton gradient. The chain is NAD(P)H-quinone oxidoreductase subunit I, chloroplastic from Encelia californica (Bush sunflower).